The primary structure comprises 321 residues: Beta-ketoacyl-[acyl-carrier-protein] synthase III (321 aa).

Active-site residues include cysteine 114 and histidine 248. Residues 249 to 253 form an ACP-binding region; the sequence is QANIR. Asparagine 278 is a catalytic residue.

This sequence belongs to the thiolase-like superfamily. FabH family. As to quaternary structure, homodimer.

It localises to the cytoplasm. It catalyses the reaction malonyl-[ACP] + acetyl-CoA + H(+) = 3-oxobutanoyl-[ACP] + CO2 + CoA. It participates in lipid metabolism; fatty acid biosynthesis. Its function is as follows. Catalyzes the condensation reaction of fatty acid synthesis by the addition to an acyl acceptor of two carbons from malonyl-ACP. Catalyzes the first condensation reaction which initiates fatty acid synthesis and may therefore play a role in governing the total rate of fatty acid production. Possesses both acetoacetyl-ACP synthase and acetyl transacylase activities. Its substrate specificity determines the biosynthesis of branched-chain and/or straight-chain of fatty acids. In Methylococcus capsulatus (strain ATCC 33009 / NCIMB 11132 / Bath), this protein is Beta-ketoacyl-[acyl-carrier-protein] synthase III.